The sequence spans 354 residues: MRVTDFAFELPESLIAHYPMPERSSCRLLSLDGPTGALTHGTFTDILDKLNPGDLLVFNNTRVIPARLFGRKASGGKIEVLVERMLDDKRILAHIRASKAPKPGAELLLGDDESIKATMLARHGALFEVEFNDERPVLEILNGIGHMPLPPYIDRPDEDADRELYQTVYGTRPGAVAAPTAGLHFDEPLLDKLRAKGVEMAFVTLHVGAGTFQPVRVDSIEEHTMHSEYAEVPQEVVDAVLAAKARGNRVIAVGTTSVRSLESAAQAAKDALIAPFFDDTQIFIYPGYQYQVIDALVTNFHLPESTLIMLVSAFAGYQHTMNAYKVAVEQKYRFFSYGDAMFITYNPQAISERP.

The protein belongs to the QueA family. In terms of assembly, monomer.

The protein localises to the cytoplasm. It carries out the reaction 7-aminomethyl-7-carbaguanosine(34) in tRNA + S-adenosyl-L-methionine = epoxyqueuosine(34) in tRNA + adenine + L-methionine + 2 H(+). It participates in tRNA modification; tRNA-queuosine biosynthesis. Functionally, transfers and isomerizes the ribose moiety from AdoMet to the 7-aminomethyl group of 7-deazaguanine (preQ1-tRNA) to give epoxyqueuosine (oQ-tRNA). This Klebsiella pneumoniae (strain 342) protein is S-adenosylmethionine:tRNA ribosyltransferase-isomerase.